Here is an 83-residue protein sequence, read N- to C-terminus: ATP synthase subunit c, chloroplastic (83 aa).

A run of 2 helical transmembrane segments spans residues Pro-3–Gly-23 and Leu-57–Ala-77.

The protein belongs to the ATPase C chain family. In terms of assembly, F-type ATPases have 2 components, F(1) - the catalytic core - and F(0) - the membrane proton channel. F(1) has five subunits: alpha(3), beta(3), gamma(1), delta(1), epsilon(1). F(0) has four main subunits: a(1), b(1), b'(1) and c(10-14). The alpha and beta chains form an alternating ring which encloses part of the gamma chain. F(1) is attached to F(0) by a central stalk formed by the gamma and epsilon chains, while a peripheral stalk is formed by the delta, b and b' chains.

Its subcellular location is the plastid. The protein resides in the chloroplast thylakoid membrane. F(1)F(0) ATP synthase produces ATP from ADP in the presence of a proton or sodium gradient. F-type ATPases consist of two structural domains, F(1) containing the extramembraneous catalytic core and F(0) containing the membrane proton channel, linked together by a central stalk and a peripheral stalk. During catalysis, ATP synthesis in the catalytic domain of F(1) is coupled via a rotary mechanism of the central stalk subunits to proton translocation. Its function is as follows. Key component of the F(0) channel; it plays a direct role in translocation across the membrane. A homomeric c-ring of between 10-14 subunits forms the central stalk rotor element with the F(1) delta and epsilon subunits. The protein is ATP synthase subunit c, chloroplastic of Diacronema lutheri (Unicellular marine alga).